The following is a 765-amino-acid chain: Palmitoyltransferase ZDHHC8 (765 aa).

Residues methionine 1–lysine 13 lie on the Cytoplasmic side of the membrane. Residues tyrosine 14–phenylalanine 34 traverse the membrane as a helical segment. At threonine 35–glycine 52 the chain is on the lumenal side. The helical transmembrane segment at isoleucine 53 to phenylalanine 73 threads the bilayer. Residues proline 74 to tyrosine 148 lie on the Cytoplasmic side of the membrane. The DHHC domain occupies lysine 104 to leucine 154. The active-site S-palmitoyl cysteine intermediate is cysteine 134. A helical membrane pass occupies residues phenylalanine 149–valine 169. Residues tyrosine 170–methionine 190 lie on the Lumenal side of the membrane. A helical membrane pass occupies residues cysteine 191–valine 211. Topologically, residues threonine 212–valine 765 are cytoplasmic. Positions glycine 293–proline 352 are disordered. A compositionally biased stretch (basic and acidic residues) spans glycine 301–leucine 311. Serine 337 is modified (phosphoserine). The residue at position 441 (arginine 441) is an Omega-N-methylarginine. The tract at residues leucine 509 to arginine 540 is disordered. Phosphoserine occurs at positions 606, 627, 675, 725, and 743. A disordered region spans residues glycine 613 to arginine 746. The span at proline 622–serine 653 shows a compositional bias: low complexity.

The protein belongs to the DHHC palmitoyltransferase family. ERF2/ZDHHC9 subfamily.

The protein resides in the golgi apparatus membrane. The protein localises to the mitochondrion membrane. It carries out the reaction L-cysteinyl-[protein] + hexadecanoyl-CoA = S-hexadecanoyl-L-cysteinyl-[protein] + CoA. Functionally, palmitoyltransferase that catalyzes the addition of palmitate onto various protein substrates and therefore functions in several unrelated biological processes. Through the palmitoylation of ABCA1 regulates the localization of the transporter to the plasma membrane and thereby regulates its function in cholesterol and phospholipid efflux. Could also pamitoylate the D(2) dopamine receptor DRD2 and regulate its stability and localization to the plasma membrane. Could also play a role in glutamatergic transmission. The sequence is that of Palmitoyltransferase ZDHHC8 from Pan troglodytes (Chimpanzee).